The following is a 76-amino-acid chain: DNA gyrase inhibitor YacG (76 aa).

4 residues coordinate Zn(2+): C20, C23, C39, and C43. The disordered stretch occupies residues 54-76 (EEKSIPGAPDLSDSDGWSDDMGY). Residues 65–76 (SDSDGWSDDMGY) are compositionally biased toward acidic residues.

Belongs to the DNA gyrase inhibitor YacG family. In terms of assembly, interacts with GyrB. Zn(2+) serves as cofactor.

Functionally, inhibits all the catalytic activities of DNA gyrase by preventing its interaction with DNA. Acts by binding directly to the C-terminal domain of GyrB, which probably disrupts DNA binding by the gyrase. The protein is DNA gyrase inhibitor YacG of Photobacterium profundum (strain SS9).